A 587-amino-acid polypeptide reads, in one-letter code: Serine/threonine-protein phosphatase 2A 65 kDa regulatory subunit A beta isoform (587 aa).

Position 2 is an N-acetylserine (serine 2). HEAT repeat units follow at residues 2-42 (SMID…ALGE), 44-80 (RTRK…YVGG), 81-119 (VEYA…QMRE), 158-196 (DMLK…TVES), 197-235 (AHLK…LLEP), 236-274 (QDCV…AVGP), 275-313 (EPTR…ILNP), 315-352 (IAIQ…VLGK), 353-391 (DATI…VIGI), 393-430 (LLSQ…QLGV), 432-469 (FFDD…EFGP), 470-508 (EWAM…VMGS), 509-547 (EITC…IVDQ), and 549-586 (VVEK…VMMS).

The protein belongs to the phosphatase 2A regulatory subunit A family. In terms of assembly, PP2A consists of a common heterodimeric core enzyme, composed of a 36 kDa catalytic subunit (subunit C) and a 65 kDa constant regulatory subunit (subunit A), that associates with a variety of regulatory subunits such as subunits B (the R2/B/PR55/B55, R3/B''/PR72/PR130/PR59 and R5/B'/B56 families). Interacts with B'THETA. Interacts with SRK2E/OST1. Interacts with SIC/RON3. Ubiquitous, with higher levels in roots and flowers (at protein level).

It is found in the cytoplasm. Its subcellular location is the cytosol. It localises to the nucleus. The protein localises to the peroxisome. In terms of biological role, the A subunit of protein phosphatase 2A serves as a scaffolding molecule to coordinate the assembly of the catalytic subunit and a variable regulatory B subunit. Involved during developmental process such as seedling and floral developments. Seems to act as a negative regulator of PP2A catalytic activity. Associates with the serine/threonine-protein phosphatase PP2A catalytic subunit C and regulatory subunit B' to positively regulates beta-oxidation of fatty acids and protoauxins in peroxisomes by dephosphorylating peroxisomal beta-oxidation-related proteins. The polypeptide is Serine/threonine-protein phosphatase 2A 65 kDa regulatory subunit A beta isoform (PP2AA2) (Arabidopsis thaliana (Mouse-ear cress)).